The following is a 209-amino-acid chain: Translation initiation factor 2 subunit beta (209 aa).

In terms of domain architecture, TRAM spans 144-202 (TIEEGKEYVVEITEVGSSGEGRTNYKGYTIFVPGAKRGETVKVRIKKVKNDVAIGEIIE).

Belongs to the eIF-2-beta/eIF-5 family. Heterotrimer composed of an alpha, a beta and a gamma chain.

EIF-2 functions in the early steps of protein synthesis by forming a ternary complex with GTP and initiator tRNA. The protein is Translation initiation factor 2 subunit beta (eif2b) of Thermoplasma acidophilum (strain ATCC 25905 / DSM 1728 / JCM 9062 / NBRC 15155 / AMRC-C165).